The primary structure comprises 432 residues: Phosphomethylpyrimidine synthase (432 aa).

Substrate-binding positions include Asn-66, Met-95, Tyr-124, His-163, 185-187, 226-229, and Glu-265; these read SRG and DGLR. Residue His-269 coordinates Zn(2+). Tyr-292 contributes to the substrate binding site. Residue His-333 participates in Zn(2+) binding. 3 residues coordinate [4Fe-4S] cluster: Cys-409, Cys-412, and Cys-416.

Belongs to the ThiC family. The cofactor is [4Fe-4S] cluster.

The enzyme catalyses 5-amino-1-(5-phospho-beta-D-ribosyl)imidazole + S-adenosyl-L-methionine = 4-amino-2-methyl-5-(phosphooxymethyl)pyrimidine + CO + 5'-deoxyadenosine + formate + L-methionine + 3 H(+). The protein operates within cofactor biosynthesis; thiamine diphosphate biosynthesis. Its function is as follows. Catalyzes the synthesis of the hydroxymethylpyrimidine phosphate (HMP-P) moiety of thiamine from aminoimidazole ribotide (AIR) in a radical S-adenosyl-L-methionine (SAM)-dependent reaction. This Desulfitobacterium hafniense (strain DSM 10664 / DCB-2) protein is Phosphomethylpyrimidine synthase.